Reading from the N-terminus, the 539-residue chain is Putative cysteine ligase BshC (539 aa).

Residues 249–270 (VETNDEVTNRLNESQAAMKRAG) adopt a coiled-coil conformation.

The protein belongs to the BshC family.

Involved in bacillithiol (BSH) biosynthesis. May catalyze the last step of the pathway, the addition of cysteine to glucosamine malate (GlcN-Mal) to generate BSH. The chain is Putative cysteine ligase BshC from Bacillus pumilus (strain SAFR-032).